The sequence spans 607 residues: Arginine--tRNA ligase (607 aa).

The 'HIGH' region signature appears at 147–157 (PNIAKEMHVGH).

It belongs to the class-I aminoacyl-tRNA synthetase family. Monomer.

The protein localises to the cytoplasm. It carries out the reaction tRNA(Arg) + L-arginine + ATP = L-arginyl-tRNA(Arg) + AMP + diphosphate. This is Arginine--tRNA ligase from Prochlorococcus marinus (strain NATL2A).